Reading from the N-terminus, the 500-residue chain is Aspartyl/glutamyl-tRNA(Asn/Gln) amidotransferase subunit B (500 aa).

It belongs to the GatB/GatE family. GatB subfamily. Heterotrimer of A, B and C subunits.

It carries out the reaction L-glutamyl-tRNA(Gln) + L-glutamine + ATP + H2O = L-glutaminyl-tRNA(Gln) + L-glutamate + ADP + phosphate + H(+). It catalyses the reaction L-aspartyl-tRNA(Asn) + L-glutamine + ATP + H2O = L-asparaginyl-tRNA(Asn) + L-glutamate + ADP + phosphate + 2 H(+). Allows the formation of correctly charged Asn-tRNA(Asn) or Gln-tRNA(Gln) through the transamidation of misacylated Asp-tRNA(Asn) or Glu-tRNA(Gln) in organisms which lack either or both of asparaginyl-tRNA or glutaminyl-tRNA synthetases. The reaction takes place in the presence of glutamine and ATP through an activated phospho-Asp-tRNA(Asn) or phospho-Glu-tRNA(Gln). The protein is Aspartyl/glutamyl-tRNA(Asn/Gln) amidotransferase subunit B of Rhizobium etli (strain CIAT 652).